The primary structure comprises 251 residues: Large ribosomal subunit protein uL4 (251 aa).

Belongs to the universal ribosomal protein uL4 family. As to quaternary structure, part of the 50S ribosomal subunit.

Functionally, one of the primary rRNA binding proteins, this protein initially binds near the 5'-end of the 23S rRNA. It is important during the early stages of 50S assembly. It makes multiple contacts with different domains of the 23S rRNA in the assembled 50S subunit and ribosome. Its function is as follows. Forms part of the polypeptide exit tunnel. In Methanothrix thermoacetophila (strain DSM 6194 / JCM 14653 / NBRC 101360 / PT) (Methanosaeta thermophila), this protein is Large ribosomal subunit protein uL4.